The following is a 352-amino-acid chain: SKP1-like protein 20 (352 aa).

The interval 108-167 is interaction with the F-box domain of F-box proteins; that stretch reads TSAADSLQLKPLVDLTSRALARIIEGKNPEEIREIFHLPDDLTEEEKLEPLKNSMDDPRI. 2 disordered regions span residues 214 to 251 and 267 to 288; these read KAVKMSKGKKKKKKKKDQKIVSSNNIHDKESHDLRSKQ and LLSAEDDISTPNAGSEDEDIDD. Basic residues predominate over residues 216 to 230; the sequence is VKMSKGKKKKKKKKD. The span at 239 to 249 shows a compositional bias: basic and acidic residues; that stretch reads IHDKESHDLRS.

The protein belongs to the SKP1 family. Part of a SCF (SKP1-cullin-F-box) protein ligase complex. Expressed in young seedlings, roots, leaves, floral stems, inflorescences, and siliques.

It is found in the nucleus. It participates in protein modification; protein ubiquitination. Functionally, involved in ubiquitination and subsequent proteasomal degradation of target proteins. Together with CUL1, RBX1 and a F-box protein, it forms a SCF E3 ubiquitin ligase complex. The functional specificity of this complex depends on the type of F-box protein. In the SCF complex, it serves as an adapter that links the F-box protein to CUL1. In Arabidopsis thaliana (Mouse-ear cress), this protein is SKP1-like protein 20 (ASK20).